A 219-amino-acid chain; its full sequence is Transmembrane protein 125 (219 aa).

4 helical membrane passes run 36-56 (LCFV…VALL), 68-88 (LATG…QLMS), 114-134 (ALVV…LAGL), and 147-167 (MLSV…GLLL).

The protein localises to the membrane. The polypeptide is Transmembrane protein 125 (TMEM125) (Homo sapiens (Human)).